The following is a 479-amino-acid chain: mRNA export factor ICP27 homolog (479 aa).

Residues 1–15 (MVPSQRLSRTSSISS) show a composition bias toward low complexity. Disordered stretches follow at residues 1 to 77 (MVPS…PSSV) and 91 to 210 (KKWD…NKPW). Positions 35 to 44 (TDCDMDPMEG) are enriched in acidic residues. The span at 132-142 (EVHGCTDESYG) shows a compositional bias: basic and acidic residues. Residues Cys-354, His-445, Cys-449, and Cys-454 each coordinate Zn(2+). The CHC2-type zinc finger occupies 354–454 (CFLPNTRDYN…HTRDCRSASC (101 aa)).

It belongs to the HHV-1 ICP27 protein family. Interacts with host XPO1 and with the XPO1 export pathway components small GTPase RAN and nucleoporin NUP214. Interacts with host SPEN, OTT1 and OTT3. Interacts with host SRSF1, SRSF3, SRSF7 and SRPK1. Interacts with host DHX9; this interaction may have an inhibitory effect on virion production. Interacts (via N-terminus) with host NXF1; this interaction plays a role in mRNA export. In terms of processing, phosphorylated by cellular protein kinase CK2.

The protein resides in the host nucleus. Its subcellular location is the host cytoplasm. In terms of biological role, promotes the nuclear export of a subset of early and late viral mRNAs by interacting with mRNAs and cellular export proteins. Additionally may prevent the establishment of cellular antiviral state, by acting as an alternative splicing factor for cellular RNAs such as STAT1, resulting in a STAT1 mRNA incapable of producing the STAT1alpha isoform. In Homo sapiens (Human), this protein is mRNA export factor ICP27 homolog.